The chain runs to 369 residues: tRNA(Met) cytidine acetate ligase (369 aa).

ATP is bound by residues 7-20 (VAEF…HKYL), Gly-96, Asn-152, and Arg-175.

It belongs to the TmcAL family.

Its subcellular location is the cytoplasm. The enzyme catalyses cytidine(34) in elongator tRNA(Met) + acetate + ATP = N(4)-acetylcytidine(34) in elongator tRNA(Met) + AMP + diphosphate. In terms of biological role, catalyzes the formation of N(4)-acetylcytidine (ac(4)C) at the wobble position of elongator tRNA(Met), using acetate and ATP as substrates. First activates an acetate ion to form acetyladenylate (Ac-AMP) and then transfers the acetyl group to tRNA to form ac(4)C34. This chain is tRNA(Met) cytidine acetate ligase, found in Streptococcus agalactiae serotype III (strain NEM316).